A 259-amino-acid polypeptide reads, in one-letter code: tRNA pseudouridine synthase A (259 aa).

Asp51 (nucleophile) is an active-site residue. Tyr109 provides a ligand contact to substrate.

This sequence belongs to the tRNA pseudouridine synthase TruA family. In terms of assembly, homodimer.

It carries out the reaction uridine(38/39/40) in tRNA = pseudouridine(38/39/40) in tRNA. Its function is as follows. Formation of pseudouridine at positions 38, 39 and 40 in the anticodon stem and loop of transfer RNAs. This chain is tRNA pseudouridine synthase A, found in Colwellia psychrerythraea (strain 34H / ATCC BAA-681) (Vibrio psychroerythus).